Here is a 456-residue protein sequence, read N- to C-terminus: MLSRQFVRENPEVVREALDNKGVDVDLDRILDVDEEWRELKSRGDDLRHERNEVSSTIGELKQAGEEEAAQEAIERSQEVKSELQEIEERADELEAELEESLLELPQIPHESVPVGADESENVERRREGFDDLREVPDNVEPHYDLGEELEILDFERGAKVAGGGFYVAKGDGARLEHALIQFMLDVHREQDYRDVFPPIAVNSTSMRGTGQLPKFTEDAYRIEGTNEDAYDDDDLWLLPTAEVPVTNLHRDEILLGEDLPLKYQAYTPNFRQEAGEHGTETRGIVRVHQFNKVEMVNFVRPEESHERFEGLVDEAEEVLRRLELPYRILEMCTGDLGFTQAKKYDLEVWAPADDMDEGPAEGGRWLEVSSVSNFEEFQARRAGIRYREEHHESAEFLHTLNGSGLAVPRIVVAILEYYQNDDGTVTVPEALRPYMGGTEVIEGHDAVGETKLGGE.

Residues 49 to 69 (HERNEVSSTIGELKQAGEEEA) are disordered. 241 to 243 (TAE) provides a ligand contact to L-serine. ATP contacts are provided by residues 272–274 (RQE) and Val-288. Glu-295 serves as a coordination point for L-serine. Position 368–371 (368–371 (EVSS)) interacts with ATP. Residue Ser-404 participates in L-serine binding.

This sequence belongs to the class-II aminoacyl-tRNA synthetase family. Type-1 seryl-tRNA synthetase subfamily. As to quaternary structure, homodimer. The tRNA molecule binds across the dimer.

The protein resides in the cytoplasm. It carries out the reaction tRNA(Ser) + L-serine + ATP = L-seryl-tRNA(Ser) + AMP + diphosphate + H(+). The catalysed reaction is tRNA(Sec) + L-serine + ATP = L-seryl-tRNA(Sec) + AMP + diphosphate + H(+). It participates in aminoacyl-tRNA biosynthesis; selenocysteinyl-tRNA(Sec) biosynthesis; L-seryl-tRNA(Sec) from L-serine and tRNA(Sec): step 1/1. Functionally, catalyzes the attachment of serine to tRNA(Ser). Is also able to aminoacylate tRNA(Sec) with serine, to form the misacylated tRNA L-seryl-tRNA(Sec), which will be further converted into selenocysteinyl-tRNA(Sec). The sequence is that of Serine--tRNA ligase from Halorubrum lacusprofundi (strain ATCC 49239 / DSM 5036 / JCM 8891 / ACAM 34).